Consider the following 86-residue polypeptide: UPF0180 protein CA_C1486 (86 aa).

It belongs to the UPF0180 family.

The polypeptide is UPF0180 protein CA_C1486 (Clostridium acetobutylicum (strain ATCC 824 / DSM 792 / JCM 1419 / IAM 19013 / LMG 5710 / NBRC 13948 / NRRL B-527 / VKM B-1787 / 2291 / W)).